The chain runs to 209 residues: Octanoyltransferase (209 aa).

One can recognise a BPL/LPL catalytic domain in the interval 30–209 (GEAPEAVYLV…LEVEFIKIFK (180 aa)). Residues 69 to 76 (RGGKFTFH), 143 to 145 (AIG), and 156 to 158 (GIA) contribute to the substrate site. Cysteine 174 functions as the Acyl-thioester intermediate in the catalytic mechanism.

This sequence belongs to the LipB family.

It is found in the cytoplasm. The catalysed reaction is octanoyl-[ACP] + L-lysyl-[protein] = N(6)-octanoyl-L-lysyl-[protein] + holo-[ACP] + H(+). Its pathway is protein modification; protein lipoylation via endogenous pathway; protein N(6)-(lipoyl)lysine from octanoyl-[acyl-carrier-protein]: step 1/2. In terms of biological role, catalyzes the transfer of endogenously produced octanoic acid from octanoyl-acyl-carrier-protein onto the lipoyl domains of lipoate-dependent enzymes. Lipoyl-ACP can also act as a substrate although octanoyl-ACP is likely to be the physiological substrate. This is Octanoyltransferase from Rickettsia bellii (strain OSU 85-389).